A 281-amino-acid chain; its full sequence is Probable endonuclease 4 (281 aa).

The Zn(2+) site is built by His69, His109, Glu145, Asp179, His182, His216, Asp229, His231, and Glu261.

The protein belongs to the AP endonuclease 2 family. Requires Zn(2+) as cofactor.

The catalysed reaction is Endonucleolytic cleavage to 5'-phosphooligonucleotide end-products.. Endonuclease IV plays a role in DNA repair. It cleaves phosphodiester bonds at apurinic or apyrimidinic (AP) sites, generating a 3'-hydroxyl group and a 5'-terminal sugar phosphate. The polypeptide is Probable endonuclease 4 (Parabacteroides distasonis (strain ATCC 8503 / DSM 20701 / CIP 104284 / JCM 5825 / NCTC 11152)).